Reading from the N-terminus, the 186-residue chain is Methyl-CpG-binding domain-containing protein 4 (186 aa).

A CW-type zinc finger spans residues 22-77; it reads GRLIDTYAAQCDNCHKWRVIDSQEEYEDIRSKMLEDPFNCQKKQGMSCEEPADIDY. The short motif at 31 to 69 is the MBD-associated domain (MAD) element; the sequence is QCDNCHKWRVIDSQEEYEDIRSKMLEDPFNCQKKQGMSC. 4 residues coordinate Zn(2+): Cys-32, Cys-35, Cys-61, and Cys-69. In terms of domain architecture, MBD spans 83–153; sequence WVIDKPGLPK…GDFNFTVPKV (71 aa). A disordered region spans residues 154–186; the sequence is MEDTVPPDPKLGSPFPSTTTTTSEKSSVKQSHN. A compositionally biased stretch (low complexity) spans 166-178; the sequence is SPFPSTTTTTSEK.

As to expression, expressed in rosette leaves, buds, flowers, stems, mature seeds and roots.

The protein resides in the nucleus. Transcriptional regulator that binds CpG, CpNpN and CpNpG (N is A, T, or C) islands in promoters regardless the DNA methylation status. Plays probably a role in gene silencing. This chain is Methyl-CpG-binding domain-containing protein 4 (MBD4), found in Arabidopsis thaliana (Mouse-ear cress).